The following is a 157-amino-acid chain: MLFGYLVGFLAADPEERMTSGGKRVVVLRLGVKSRVGSKDETVWCRCNIWNNRYDKMIPYLKKGSSVIVAGELSVESYMGRDGSPQASISVSVDTLKFNSGSSRPESRGSDEGRQRSNDNVSLGFEGESLDTEIALDKEVYAGFGEDQQYASEDVPF.

The SSB domain maps to 1–100 (MLFGYLVGFL…VSVDTLKFNS (100 aa)). The interval 97–126 (KFNSGSSRPESRGSDEGRQRSNDNVSLGFE) is disordered. Residues 105–117 (PESRGSDEGRQRS) are compositionally biased toward basic and acidic residues.

In terms of assembly, homotetramer.

This chain is Single-stranded DNA-binding protein (ssb), found in Chlamydia muridarum (strain MoPn / Nigg).